Consider the following 536-residue polypeptide: Inactive beta-amylase 9 (536 aa).

S47 carries the phosphoserine modification. The disordered stretch occupies residues 511–536; the sequence is QASEAEVEAETASIGSGTGAPSLQTA.

Belongs to the glycosyl hydrolase 14 family. Mostly expressed in young floral buds, flowers and roots, and, to a later extent, in stems and leaves.

It localises to the cytoplasm. The protein is Inactive beta-amylase 9 (BAM9) of Arabidopsis thaliana (Mouse-ear cress).